A 389-amino-acid polypeptide reads, in one-letter code: Protein DDI1 homolog 1 (389 aa).

The interval 109–132 (SSSSAQSAQRTRRVEQDDEGEKSM) is disordered. The active site involves D261.

Belongs to the DDI1 family. As to expression, expressed in most tissues.

It localises to the cytoplasm. It is found in the nucleus. Its function is as follows. Aspartic protease. Required for the cleavage and activation of transcription factors such as isoform a of the transcription factor skn-1, which in turn regulates the expression of proteasomal subunits such as rpt-3. Plays a key role in the degradation of the potassium channel slo-1, perhaps acting directly, in cleaving slo-1 upstream of the ER-associated degradation pathway (ERAD), and also indirectly, via activation of the transcription factor skn-1, which mediates proteasomal homeostasis. This chain is Protein DDI1 homolog 1, found in Caenorhabditis elegans.